Here is a 470-residue protein sequence, read N- to C-terminus: Probable glycosyltransferase At3g07620 (470 aa).

Topologically, residues 1–7 are cytoplasmic; it reads MRDYIPK. A helical; Signal-anchor transmembrane segment spans residues 8–28; sequence YLNAFLLAFATFAVGFAIFIA. Residues 29–470 lie on the Lumenal side of the membrane; sequence KDSNSSSHLY…WLRRLNVKLL (442 aa). 6 N-linked (GlcNAc...) asparagine glycosylation sites follow: asparagine 32, asparagine 73, asparagine 105, asparagine 236, asparagine 274, and asparagine 299.

The protein belongs to the glycosyltransferase 47 family.

The protein localises to the golgi apparatus membrane. Functionally, may be involved in cell wall biosynthesis. In Arabidopsis thaliana (Mouse-ear cress), this protein is Probable glycosyltransferase At3g07620.